Consider the following 60-residue polypeptide: Large ribosomal subunit protein uL30 (60 aa).

The protein belongs to the universal ribosomal protein uL30 family. Part of the 50S ribosomal subunit.

In Streptococcus thermophilus (strain CNRZ 1066), this protein is Large ribosomal subunit protein uL30.